We begin with the raw amino-acid sequence, 1377 residues long: Carboxypeptidase D (1377 aa).

A signal peptide spans 1 to 37 (MASGRDERPPWRLGRLRLLPPPPLLLLLLLLRSSAQA). The Extracellular segment spans residues 38–1296 (AHIKKAEATT…DNRIFGLPRE (1259 aa)). The 318-residue stretch at 62 to 379 (HYYHEAALGE…ESLITLIEKV (318 aa)) folds into the Peptidase M14 1 domain. Residues histidine 138 and glutamate 141 each coordinate Zn(2+). A Cell attachment site motif is present at residues 161-163 (RGD). N-linked (GlcNAc...) asparagine glycans are attached at residues asparagine 171 and asparagine 216. The interval 188 to 231 (RAREGDCGLGDSGPPGTSGRDNSRGRDLNRSFPDQFSTGEPPSL) is disordered. Histidine 256 contributes to the Zn(2+) binding site. The residue at position 264 (tyrosine 264) is a Phosphotyrosine. A Phosphoserine modification is found at serine 269. The Proton donor/acceptor role is filled by glutamate 349. 4 N-linked (GlcNAc...) asparagine glycosylation sites follow: asparagine 398, asparagine 409, asparagine 428, and asparagine 521. Residues 501-791 (HHHHFPDMEI…RSLIQFMKQV (291 aa)) form the Peptidase M14 2 domain. Residues histidine 563 and glutamate 566 each contribute to the Zn(2+) site. An N-linked (GlcNAc...) asparagine glycan is attached at asparagine 625. Histidine 670 provides a ligand contact to Zn(2+). The active-site Proton donor/acceptor is the glutamate 761. 6 N-linked (GlcNAc...) asparagine glycosylation sites follow: asparagine 810, asparagine 854, asparagine 866, asparagine 878, asparagine 952, and asparagine 975. A disordered region spans residues 874–898 (ADANNESKKGRGHSTSTDDTSDPTS). A Peptidase M14 3 domain is found at 929-1208 (RYHSYKDLSE…KSLLSMLVEV (280 aa)). A compositionally biased stretch (basic and acidic residues) spans 1038–1047 (RERAQEKDCT). Positions 1038 to 1064 (RERAQEKDCTSKTGHTNAHGKDLDTDF) are disordered. N-linked (GlcNAc...) asparagine glycans are attached at residues asparagine 1067 and asparagine 1139. A helical membrane pass occupies residues 1297-1317 (LVVTVSGATMSALILTACIIW). S-palmitoyl cysteine attachment occurs at residues cysteine 1314, cysteine 1318, and cysteine 1320. The Cytoplasmic segment spans residues 1318-1377 (CICSIKSNRHKDGFHRLRQHHDEYEDEIRMMSTGSKKSLLSHEFQDETDTEEETLYSSKH). Serine 1355 and serine 1358 each carry phosphoserine. The interval 1356-1377 (LLSHEFQDETDTEEETLYSSKH) is disordered. 2 positions are modified to phosphothreonine: threonine 1365 and threonine 1367.

It belongs to the peptidase M14 family. The cofactor is Zn(2+).

Its subcellular location is the cell membrane. It catalyses the reaction Releases C-terminal Arg and Lys from polypeptides.. The sequence is that of Carboxypeptidase D (Cpd) from Mus musculus (Mouse).